Here is a 334-residue protein sequence, read N- to C-terminus: Phosphoribosylformylglycinamidine cyclo-ligase (334 aa).

This sequence belongs to the AIR synthase family.

The protein resides in the cytoplasm. The catalysed reaction is 2-formamido-N(1)-(5-O-phospho-beta-D-ribosyl)acetamidine + ATP = 5-amino-1-(5-phospho-beta-D-ribosyl)imidazole + ADP + phosphate + H(+). Its pathway is purine metabolism; IMP biosynthesis via de novo pathway; 5-amino-1-(5-phospho-D-ribosyl)imidazole from N(2)-formyl-N(1)-(5-phospho-D-ribosyl)glycinamide: step 2/2. The chain is Phosphoribosylformylglycinamidine cyclo-ligase from Thermococcus gammatolerans (strain DSM 15229 / JCM 11827 / EJ3).